The primary structure comprises 88 residues: UPF0250 protein Shewmr4_0986 (88 aa).

The protein belongs to the UPF0250 family.

In Shewanella sp. (strain MR-4), this protein is UPF0250 protein Shewmr4_0986.